We begin with the raw amino-acid sequence, 272 residues long: Imidazole glycerol phosphate synthase subunit HisF (272 aa).

Catalysis depends on residues Asp-11 and Asp-130.

Belongs to the HisA/HisF family. As to quaternary structure, heterodimer of HisH and HisF.

It localises to the cytoplasm. The catalysed reaction is 5-[(5-phospho-1-deoxy-D-ribulos-1-ylimino)methylamino]-1-(5-phospho-beta-D-ribosyl)imidazole-4-carboxamide + L-glutamine = D-erythro-1-(imidazol-4-yl)glycerol 3-phosphate + 5-amino-1-(5-phospho-beta-D-ribosyl)imidazole-4-carboxamide + L-glutamate + H(+). Its pathway is amino-acid biosynthesis; L-histidine biosynthesis; L-histidine from 5-phospho-alpha-D-ribose 1-diphosphate: step 5/9. IGPS catalyzes the conversion of PRFAR and glutamine to IGP, AICAR and glutamate. The HisF subunit catalyzes the cyclization activity that produces IGP and AICAR from PRFAR using the ammonia provided by the HisH subunit. This chain is Imidazole glycerol phosphate synthase subunit HisF, found in Methanococcus maripaludis (strain C6 / ATCC BAA-1332).